Here is a 161-residue protein sequence, read N- to C-terminus: Small ribosomal subunit protein uS9 (161 aa).

This sequence belongs to the universal ribosomal protein uS9 family.

The sequence is that of Small ribosomal subunit protein uS9 (rpsI) from Rickettsia prowazekii (strain Madrid E).